A 151-amino-acid polypeptide reads, in one-letter code: Putative coiled-coil-helix-coiled-coil-helix domain-containing protein CHCHD2P9, mitochondrial (151 aa).

The N-terminal 9 residues, 1 to 9, are a transit peptide targeting the mitochondrion; sequence MPRGSRSRT. Disordered stretches follow at residues 1 to 50 and 75 to 110; these read MPRG…AAAP and TQGH…PAQQ. Residues 10 to 26 are compositionally biased toward low complexity; the sequence is SRMAPPASRAPQMRAAP. The span at 27-38 shows a compositional bias: pro residues; sequence RPAPVAQPPAAA. Low complexity-rich tracts occupy residues 39 to 50 and 100 to 110; these read PPSAVGSSAAAP and QEPQGTQPAQQ. The CHCH domain maps to 111-151; that stretch reads QQPCFYGIKQFLECAQNQGDIKLCEDFSKVLKQCRLAKGLA. Short sequence motifs (cx9C motif) lie at residues 114–124 and 134–144; these read CFYGIKQFLEC and CEDFSKVLKQC. Cystine bridges form between Cys114–Cys144 and Cys124–Cys134.

It localises to the mitochondrion. This Homo sapiens (Human) protein is Putative coiled-coil-helix-coiled-coil-helix domain-containing protein CHCHD2P9, mitochondrial (CHCHD2P9).